A 186-amino-acid chain; its full sequence is ADP-ribosylation factor-like protein DDB_G0292332 (186 aa).

GTP is bound by residues G24–T31, D78–K82, and N138–D141.

Belongs to the small GTPase superfamily. Arf family.

Functionally, binds and exchanges GTP and GDP. The polypeptide is ADP-ribosylation factor-like protein DDB_G0292332 (Dictyostelium discoideum (Social amoeba)).